The sequence spans 243 residues: Ribonuclease 3 (243 aa).

In terms of domain architecture, RNase III spans 15-144; it reads NDTISKIINY…LIGAIYIDGG (130 aa). Glu57 contacts Mg(2+). Residue Asp61 is part of the active site. Residues Asn130 and Glu133 each coordinate Mg(2+). Glu133 is a catalytic residue. The DRBM domain occupies 169–238; sequence DPKTSLQEWT…AELMLEKINN (70 aa).

The protein belongs to the ribonuclease III family. In terms of assembly, homodimer. Mg(2+) is required as a cofactor.

The protein localises to the cytoplasm. The catalysed reaction is Endonucleolytic cleavage to 5'-phosphomonoester.. Digests double-stranded RNA. Involved in the processing of primary rRNA transcript to yield the immediate precursors to the large and small rRNAs (23S and 16S). Processes some mRNAs, and tRNAs when they are encoded in the rRNA operon. Processes pre-crRNA and tracrRNA of type II CRISPR loci if present in the organism. In Wolbachia sp. subsp. Brugia malayi (strain TRS), this protein is Ribonuclease 3.